The chain runs to 494 residues: Probable malate:quinone oxidoreductase 3 (494 aa).

It belongs to the MQO family. FAD serves as cofactor.

It carries out the reaction (S)-malate + a quinone = a quinol + oxaloacetate. Its pathway is carbohydrate metabolism; tricarboxylic acid cycle; oxaloacetate from (S)-malate (quinone route): step 1/1. This is Probable malate:quinone oxidoreductase 3 from Staphylococcus epidermidis (strain ATCC 35984 / DSM 28319 / BCRC 17069 / CCUG 31568 / BM 3577 / RP62A).